A 245-amino-acid polypeptide reads, in one-letter code: Flavin-dependent thymidylate synthase (245 aa).

The region spanning 6–220 is the ThyX domain; sequence PRVELLAHTP…PELFAHAGAK (215 aa). Residues serine 65, 89–91, and glutamine 97 contribute to the FAD site; that span reads RHR. Residues 86-89, 97-101, and arginine 159 each bind dUMP; these read QLVR and QQSQR. Positions 89 to 99 match the ThyX motif motif; that stretch reads RHRIASFSQQS. FAD is bound by residues 175 to 177 and histidine 181; that span reads NCR. Arginine 186 is a dUMP binding site. Arginine 186 functions as the Involved in ionization of N3 of dUMP, leading to its activation in the catalytic mechanism.

Belongs to the thymidylate synthase ThyX family. In terms of assembly, homotetramer. It depends on FAD as a cofactor.

The catalysed reaction is dUMP + (6R)-5,10-methylene-5,6,7,8-tetrahydrofolate + NADPH + H(+) = dTMP + (6S)-5,6,7,8-tetrahydrofolate + NADP(+). It participates in pyrimidine metabolism; dTTP biosynthesis. Functionally, catalyzes the reductive methylation of 2'-deoxyuridine-5'-monophosphate (dUMP) to 2'-deoxythymidine-5'-monophosphate (dTMP) while utilizing 5,10-methylenetetrahydrofolate (mTHF) as the methyl donor, and NADPH and FADH(2) as the reductant. This chain is Flavin-dependent thymidylate synthase, found in Nitratidesulfovibrio vulgaris (strain ATCC 29579 / DSM 644 / CCUG 34227 / NCIMB 8303 / VKM B-1760 / Hildenborough) (Desulfovibrio vulgaris).